The primary structure comprises 946 residues: RIPOR family member 3 (946 aa).

A phosphoserine mark is found at S9, S24, and S340. T345 carries the phosphothreonine modification. Residues S351 and S384 each carry the phosphoserine modification. Positions 390–512 (GPSLRSQSQE…GDREDGPGVA (123 aa)) are disordered. The segment covering 437 to 446 (SIEEEAREDP) has biased composition (basic and acidic residues). Residues 478 to 495 (SLPQGSLFHSGTASSSQN) are compositionally biased toward polar residues. Residues 496–508 (GHEEGATGDREDG) show a composition bias toward basic and acidic residues.

It belongs to the RIPOR family.

In Homo sapiens (Human), this protein is RIPOR family member 3.